We begin with the raw amino-acid sequence, 330 residues long: Embigin (330 aa).

Residues 1-33 form the signal peptide; the sequence is MRSHTGLRALVAPGYPLLLLCLLAATRPDPAEG. The Extracellular segment spans residues 34–254; sequence DPTDPTFTSL…QLGESEEQNE (221 aa). 2 consecutive Ig-like V-type domains span residues 38-161 and 162-256; these read PTFT…IHVP and KAHG…NELV. Residues Asn55, Asn62, Asn70, Asn101, Asn118, Asn191, Asn198, Asn216, and Asn221 are each glycosylated (N-linked (GlcNAc...) asparagine). 2 disulfides stabilise this stretch: Cys89–Cys145 and Cys182–Cys240. The helical transmembrane segment at 255–283 threads the bilayer; it reads LVVLSFLVPLKPFLAILAEVILLVAIILL. At 284–330 the chain is on the cytoplasmic side; the sequence is CEVYTHKKKNDPDAGKEFEQIEQLKSDDSNGIENNVPRYRKTDSADQ. A compositionally biased stretch (basic and acidic residues) spans 293 to 311; sequence NDPDAGKEFEQIEQLKSDD. Residues 293 to 330 are disordered; it reads NDPDAGKEFEQIEQLKSDDSNGIENNVPRYRKTDSADQ. Phosphoserine is present on Ser312.

As to quaternary structure, interacts with SLC16A1, SLC16A6 and SLC16A7. As to expression, only member of the immunoglobulin superfamily to be expressed in embryonal carcinoma cells, which resemble multipotential cells of early embryos.

It is found in the cell membrane. Its subcellular location is the synapse. Its function is as follows. Plays a role in targeting the monocarboxylate transporters SLC16A1, SLC16A6 and SLC16A7 to the cell membrane. Plays a role in the outgrowth of motoneurons and in the formation of neuromuscular junctions. Following muscle denervation, promotes nerve terminal sprouting and the formation of additional acetylcholine receptor clusters at synaptic sites without affecting terminal Schwann cell number or morphology. Delays the retraction of terminal sprouts following re-innervation of denervated endplates. The chain is Embigin (Emb) from Mus musculus (Mouse).